Reading from the N-terminus, the 376-residue chain is Chaperone protein DnaJ (376 aa).

Residues 5–70 enclose the J domain; it reads DYYEILGVSK…QKRAAYDQYG (66 aa). The CR-type zinc finger occupies 131–209; the sequence is GVTKEIRIPT…CHGHGRVERS (79 aa). Zn(2+) is bound by residues Cys-144, Cys-147, Cys-161, Cys-164, Cys-183, Cys-186, Cys-197, and Cys-200. 4 CXXCXGXG motif repeats span residues 144–151, 161–168, 183–190, and 197–204; these read CDVCHGSG, CPTCHGSG, CPHCQGRG, and CNKCHGHG.

Belongs to the DnaJ family. Homodimer. The cofactor is Zn(2+).

It localises to the cytoplasm. Participates actively in the response to hyperosmotic and heat shock by preventing the aggregation of stress-denatured proteins and by disaggregating proteins, also in an autonomous, DnaK-independent fashion. Unfolded proteins bind initially to DnaJ; upon interaction with the DnaJ-bound protein, DnaK hydrolyzes its bound ATP, resulting in the formation of a stable complex. GrpE releases ADP from DnaK; ATP binding to DnaK triggers the release of the substrate protein, thus completing the reaction cycle. Several rounds of ATP-dependent interactions between DnaJ, DnaK and GrpE are required for fully efficient folding. Also involved, together with DnaK and GrpE, in the DNA replication of plasmids through activation of initiation proteins. This is Chaperone protein DnaJ from Escherichia coli (strain K12 / MC4100 / BW2952).